The primary structure comprises 461 residues: D-phenylhydantoinase (461 aa).

Positions 59, 61, and 151 each coordinate a divalent metal cation. The residue at position 151 (Lys151) is an N6-carboxylysine. Tyr156 is a binding site for substrate. A divalent metal cation contacts are provided by His182 and His239. Ser286 contributes to the substrate binding site. Residue Asp313 participates in a divalent metal cation binding. Position 335 (Asn335) interacts with substrate.

It belongs to the metallo-dependent hydrolases superfamily. Hydantoinase/dihydropyrimidinase family. Homotetramer. A divalent metal cation is required as a cofactor. In terms of processing, carboxylation allows a single lysine to coordinate two divalent metal cations.

It carries out the reaction D-5-phenylhydantoin + H2O = N-carbamoyl-D-phenylglycine + H(+). In terms of biological role, catalyzes the stereospecific hydrolysis of the cyclic amide bond of D-hydantoin derivatives with an aromatic side chains at the 5'-position. Has no activity on dihydropyrimidines. The physiological function is unknown. The protein is D-phenylhydantoinase of Escherichia coli O7:K1 (strain IAI39 / ExPEC).